Consider the following 397-residue polypeptide: Acetyl-CoA acetyltransferase, cytosolic (397 aa).

Met1 bears the N-acetylmethionine mark. The active-site Acyl-thioester intermediate is the Cys92. Lys200 carries the post-translational modification N6-acetyllysine. Residues Arg223 and Ser226 each coordinate CoA. 2 positions are modified to N6-acetyllysine: Lys233 and Lys235. Position 252 (Ser252) interacts with CoA. Cys383 acts as the Proton donor/acceptor in catalysis.

Belongs to the thiolase-like superfamily. Thiolase family. In terms of assembly, homotetramer.

Its subcellular location is the cytoplasm. It localises to the cytosol. It carries out the reaction 2 acetyl-CoA = acetoacetyl-CoA + CoA. It participates in lipid metabolism; fatty acid metabolism. Functionally, involved in the biosynthetic pathway of cholesterol. The polypeptide is Acetyl-CoA acetyltransferase, cytosolic (ACAT2) (Homo sapiens (Human)).